The following is a 766-amino-acid chain: Phosphoribosylformylglycinamidine synthase subunit PurL (766 aa).

Histidine 66 is an active-site residue. ATP is bound by residues tyrosine 69 and lysine 113. Mg(2+) is bound at residue glutamate 115. Residues 116–119 and arginine 138 each bind substrate; that span reads SHNH. Histidine 117 functions as the Proton acceptor in the catalytic mechanism. A Mg(2+)-binding site is contributed by aspartate 139. Glutamine 264 is a substrate binding site. Residue aspartate 292 coordinates Mg(2+). 336–338 contributes to the substrate binding site; it reads ESQ. ATP-binding residues include asparagine 524 and glycine 561. Asparagine 562 serves as a coordination point for Mg(2+). Serine 564 is a binding site for substrate.

This sequence belongs to the FGAMS family. In terms of assembly, monomer. Part of the FGAM synthase complex composed of 1 PurL, 1 PurQ and 2 PurS subunits.

The protein localises to the cytoplasm. It carries out the reaction N(2)-formyl-N(1)-(5-phospho-beta-D-ribosyl)glycinamide + L-glutamine + ATP + H2O = 2-formamido-N(1)-(5-O-phospho-beta-D-ribosyl)acetamidine + L-glutamate + ADP + phosphate + H(+). Its pathway is purine metabolism; IMP biosynthesis via de novo pathway; 5-amino-1-(5-phospho-D-ribosyl)imidazole from N(2)-formyl-N(1)-(5-phospho-D-ribosyl)glycinamide: step 1/2. Functionally, part of the phosphoribosylformylglycinamidine synthase complex involved in the purines biosynthetic pathway. Catalyzes the ATP-dependent conversion of formylglycinamide ribonucleotide (FGAR) and glutamine to yield formylglycinamidine ribonucleotide (FGAM) and glutamate. The FGAM synthase complex is composed of three subunits. PurQ produces an ammonia molecule by converting glutamine to glutamate. PurL transfers the ammonia molecule to FGAR to form FGAM in an ATP-dependent manner. PurS interacts with PurQ and PurL and is thought to assist in the transfer of the ammonia molecule from PurQ to PurL. This Mycobacterium bovis (strain BCG / Pasteur 1173P2) protein is Phosphoribosylformylglycinamidine synthase subunit PurL.